Consider the following 534-residue polypeptide: Autophagic-related protein 16.2 (534 aa).

WD repeat units follow at residues 243 to 281 (THDG…TDAS), 288 to 329 (GCLG…STFS), 330 to 368 (GHTD…CLKS), 371 to 411 (VGST…ATYS), 413 to 452 (ELGQ…IIHL), 459 to 498 (KTSC…LEKV), and 504 to 534 (SDSA…TLWR).

Belongs to the WD repeat tipD family. In terms of assembly, homodimer (via N-terminus). Most likely a component of a complex at least containing atg-5, lgg-3, atg-16.1 and/or atg-16.2. Interacts (via N-terminus) with atg-16.1 (via N-terminus). Interacts (via N-terminus) with atg-5. Interacts (via WD 5-6 repeats) with lgg-2; the interaction is direct. Expressed in neurons, pharyngeal muscles, body wall muscle cells and intestinal cells.

Its subcellular location is the cytoplasm. The protein localises to the cell membrane. Functionally, most likely a component of the atg-5-atg-12-atg-16.1/atg-16.2 complex, which is recruited to the preautophagosomal membrane and associates with lgg-2 to promote autophagosome formation. Plays a role in the recruitment of lipidated lgg-1 probably to the autophagosome membrane to promote autophagosome formation. Furthermore, association with atg-5 is required for the nucleation of lgg-1 positive autophagosomes. Although its role in autophagosome formation may be distinct to the role of atg-16.2, it functions in a partially redundant manner with atg-16.1 to regulate autophagic processes. In a daf-18/PTEN- and daf-16/FOXO-dependent manner, required for maintaining the numbers of germ stem cell progenitors in the gonad during the late phases of larval development. This is Autophagic-related protein 16.2 from Caenorhabditis elegans.